Reading from the N-terminus, the 284-residue chain is METARLLFVHAHPDDETLTTGATIAHYVARGAQVHVITCTLGEEGEVIGDEWAQLAVDRADQLGGYRIGELTAALAELGVDRPRFLGGAGRWRDSGMDGTPARQQQRFVDGDFAEQTATLAAAIDELRPHVVVTYDPNGGYGHPDHIHAHRVTTAAVAASTWQVPKLYWTVTSSSALAAALASMGAVPEEWIRVSADDLPLFGYSDEAIDAALDLTAHESARVAALRAHRTQVSVSPDGRSFALSNNVALPVDPTEYYVLAAGSAGARDERGWETDLLSGLSVG.

Zn(2+) contacts are provided by His-12, Asp-15, and His-146.

The protein belongs to the MshB deacetylase family. Zn(2+) serves as cofactor.

The catalysed reaction is 1D-myo-inositol 2-acetamido-2-deoxy-alpha-D-glucopyranoside + H2O = 1D-myo-inositol 2-amino-2-deoxy-alpha-D-glucopyranoside + acetate. Its function is as follows. Catalyzes the deacetylation of 1D-myo-inositol 2-acetamido-2-deoxy-alpha-D-glucopyranoside (GlcNAc-Ins) in the mycothiol biosynthesis pathway. This Mycolicibacterium vanbaalenii (strain DSM 7251 / JCM 13017 / BCRC 16820 / KCTC 9966 / NRRL B-24157 / PYR-1) (Mycobacterium vanbaalenii) protein is 1D-myo-inositol 2-acetamido-2-deoxy-alpha-D-glucopyranoside deacetylase.